The sequence spans 95 residues: Protein TRACHEARY ELEMENT DIFFERENTIATION-RELATED 6 (95 aa).

The Extracellular segment spans residues methionine 1–threonine 3. Residues isoleucine 4–leucine 24 traverse the membrane as a helical segment. Over cysteine 25 to alanine 95 the chain is Cytoplasmic.

Interacts with the secondary cell wall (SCW)-related cellulose synthase complex. In terms of tissue distribution, accumulates in cells differentiating into tracheary element (TE) which undergo secondary cell wall (SCW) formation.

The protein resides in the cell membrane. It is found in the secreted. The protein localises to the cell wall. Functionally, involved in the secondary cell wall (SCW) formation of vessel elements (e.g. protoxylem and metaxylem), thus promoting tracheary element (TE) differentiation. This Zinnia elegans (Garden zinnia) protein is Protein TRACHEARY ELEMENT DIFFERENTIATION-RELATED 6.